Here is a 323-residue protein sequence, read N- to C-terminus: Acetyl-coenzyme A carboxylase carboxyl transferase subunit alpha (323 aa).

Positions 39–293 (RLSKKSQQLT…RRALADSLRQ (255 aa)) constitute a CoA carboxyltransferase C-terminal domain.

This sequence belongs to the AccA family. Acetyl-CoA carboxylase is a heterohexamer composed of biotin carboxyl carrier protein (AccB), biotin carboxylase (AccC) and two subunits each of ACCase subunit alpha (AccA) and ACCase subunit beta (AccD).

It localises to the cytoplasm. The catalysed reaction is N(6)-carboxybiotinyl-L-lysyl-[protein] + acetyl-CoA = N(6)-biotinyl-L-lysyl-[protein] + malonyl-CoA. It participates in lipid metabolism; malonyl-CoA biosynthesis; malonyl-CoA from acetyl-CoA: step 1/1. Component of the acetyl coenzyme A carboxylase (ACC) complex. First, biotin carboxylase catalyzes the carboxylation of biotin on its carrier protein (BCCP) and then the CO(2) group is transferred by the carboxyltransferase to acetyl-CoA to form malonyl-CoA. This is Acetyl-coenzyme A carboxylase carboxyl transferase subunit alpha from Paraburkholderia phytofirmans (strain DSM 17436 / LMG 22146 / PsJN) (Burkholderia phytofirmans).